Reading from the N-terminus, the 490-residue chain is Katanin p60 ATPase-containing subunit A-like 1 (490 aa).

Met-1 carries the N-acetylmethionine modification. Residues 95-184 form a disordered region; sequence DPAVWPPPVP…DGEMPKFDGA (90 aa). Positions 116–127 are enriched in basic and acidic residues; sequence PNREVRPLRKEM. The segment covering 128–139 has biased composition (low complexity); sequence AGVGARGPVGRA. The span at 143–169 shows a compositional bias: basic and acidic residues; sequence SKSEKPSTSRDKDCRARGRDDKGRKNM. Residue Ser-174 is modified to Phosphoserine. 248–255 is a binding site for ATP; that stretch reads GPPGTGKT.

This sequence belongs to the AAA ATPase family. Katanin p60 subunit A1 subfamily. A-like 1 sub-subfamily. In terms of assembly, interacts with KATNB1 and KATNBL1.

Its subcellular location is the cytoplasm. The protein resides in the cytoskeleton. It localises to the spindle pole. The protein localises to the spindle. It carries out the reaction n ATP + n H2O + a microtubule = n ADP + n phosphate + (n+1) alpha/beta tubulin heterodimers.. Functionally, regulates microtubule dynamics in Sertoli cells, a process that is essential for spermiogenesis and male fertility. Severs microtubules in an ATP-dependent manner, promoting rapid reorganization of cellular microtubule arrays. Has microtubule-severing activity in vitro. This Papio anubis (Olive baboon) protein is Katanin p60 ATPase-containing subunit A-like 1.